A 474-amino-acid chain; its full sequence is HTH-type transcriptional regulator RamB (474 aa).

Positions 10–64 (VRQLRNERGFSQAALAQMLEISPSYLNQIEHDVRPLTVAVLLRITEVFGVDATFF) constitute an HTH cro/C1-type domain. A DNA-binding region (H-T-H motif) is located at residues 21 to 40 (QAALAQMLEISPSYLNQIEH).

The protein belongs to the short-chain fatty acyl-CoA assimilation regulator (ScfR) family.

Involved in the control of the glyoxylate cycle. RamB negatively controls the expression of icl expression during growth on acetate as the sole carbon source. The protein is HTH-type transcriptional regulator RamB of Mycobacterium tuberculosis (strain CDC 1551 / Oshkosh).